Here is an 875-residue protein sequence, read N- to C-terminus: Serine/threonine-protein phosphatase 4 regulatory subunit 4 (875 aa).

HEAT repeat units lie at residues 215-253 (ILPLVKSLCQDVEYEVRSCMCRQLENIAQGIGAELTKNV) and 254-292 (VLPELIELSRDESGSVRLAAFETLVNMLDMFDTDDRSQT). The stretch at 686–730 (MFQKKNYEKDLLDQEKEREELLFLEMEQLEKEKHQSDGRLASDKS) forms a coiled coil. Residues 718–739 (KHQSDGRLASDKSFEKKRRDSR) are compositionally biased toward basic and acidic residues. Residues 718-773 (KHQSDGRLASDKSFEKKRRDSRTSTQSLSKNLPISVPGPSSSTASTSKEIKKSKLT) form a disordered region. Over residues 740-764 (TSTQSLSKNLPISVPGPSSSTASTS) the composition is skewed to polar residues. Position 777 is a phosphoserine (serine 777). Threonine 799 is modified (phosphothreonine). Positions 825 to 859 (RNASSVPASFSPNPVMPSTSRGPGNTADPKSSGSK) are enriched in polar residues. Residues 825–875 (RNASSVPASFSPNPVMPSTSRGPGNTADPKSSGSKDAQPRKATLKSRKSNP) form a disordered region. The segment covering 866–875 (ATLKSRKSNP) has biased composition (basic residues).

Serine/threonine-protein phosphatase 4 (PP4) occurs in different assemblies of the catalytic and one or more regulatory subunits. Component of the PP4 complex PPP4C-PPP4R4.

Its subcellular location is the cytoplasm. Its function is as follows. Putative regulatory subunit of serine/threonine-protein phosphatase 4. This Mus musculus (Mouse) protein is Serine/threonine-protein phosphatase 4 regulatory subunit 4 (Ppp4r4).